Here is a 317-residue protein sequence, read N- to C-terminus: R2-like ligand binding oxidase (317 aa).

3 residues coordinate Mn(2+): Glu-73, Glu-106, and His-109. The segment at residues 76–167 is a cross-link (3-(O4'-tyrosyl)-valine (Val-Tyr)); that stretch reads VTQDLQPFMA…ANQVRASVTY (92 aa). Glu-106 provides a ligand contact to Fe cation. 3 residues coordinate Fe cation: Glu-172, Glu-207, and His-210.

It belongs to the ribonucleoside diphosphate reductase small chain family. R2-like ligand binding oxidase subfamily. In terms of assembly, homodimer. Fe cation is required as a cofactor. Mn(2+) serves as cofactor.

Its function is as follows. Probable oxidase. This chain is R2-like ligand binding oxidase, found in Saccharopolyspora erythraea (strain ATCC 11635 / DSM 40517 / JCM 4748 / NBRC 13426 / NCIMB 8594 / NRRL 2338).